We begin with the raw amino-acid sequence, 329 residues long: Acetyl-coenzyme A carboxylase carboxyl transferase subunit alpha (329 aa).

Residues 40-294 (QLESLASRRR…RAALERHLGE (255 aa)) form the CoA carboxyltransferase C-terminal domain.

Belongs to the AccA family. Acetyl-CoA carboxylase is a heterohexamer composed of biotin carboxyl carrier protein (AccB), biotin carboxylase (AccC) and two subunits each of ACCase subunit alpha (AccA) and ACCase subunit beta (AccD).

The protein localises to the cytoplasm. It carries out the reaction N(6)-carboxybiotinyl-L-lysyl-[protein] + acetyl-CoA = N(6)-biotinyl-L-lysyl-[protein] + malonyl-CoA. It functions in the pathway lipid metabolism; malonyl-CoA biosynthesis; malonyl-CoA from acetyl-CoA: step 1/1. Component of the acetyl coenzyme A carboxylase (ACC) complex. First, biotin carboxylase catalyzes the carboxylation of biotin on its carrier protein (BCCP) and then the CO(2) group is transferred by the carboxyltransferase to acetyl-CoA to form malonyl-CoA. In Synechococcus sp. (strain CC9902), this protein is Acetyl-coenzyme A carboxylase carboxyl transferase subunit alpha.